The following is a 331-amino-acid chain: Serpentine receptor class alpha-1 (331 aa).

7 helical membrane passes run 22–42 (FAVFCSQLSIISTFILSVIAV), 57–77 (IILVFNFVYANIHQFMYAIIS), 104–124 (YTEVLYVGISGMIYSQTGILI), 143–163 (VGIIISTFVLIMSIATYQIII), 189–209 (FLFIALILTFVNLISSAAVMF), 238–258 (ICVVCMAQFVTMLVYSSGVLI), and 274–294 (LITWVYTVQYNALLFPLILIF).

The protein belongs to the nematode receptor-like protein sra family.

It localises to the membrane. The sequence is that of Serpentine receptor class alpha-1 (sra-1) from Caenorhabditis elegans.